Here is a 200-residue protein sequence, read N- to C-terminus: Recombination protein RecR (200 aa).

The segment at 57–72 (CRQCRTLTEQELCPQC) adopts a C4-type zinc-finger fold. Residues 80-175 (TQLCVVEGPT…AATRIAHGVP (96 aa)) form the Toprim domain.

This sequence belongs to the RecR family.

Functionally, may play a role in DNA repair. It seems to be involved in an RecBC-independent recombinational process of DNA repair. It may act with RecF and RecO. This Pseudomonas putida (strain GB-1) protein is Recombination protein RecR.